Here is an 865-residue protein sequence, read N- to C-terminus: AdoMet-dependent rRNA methyltransferase SPB1 (865 aa).

Residues Gly-56, Trp-58, Asp-76, Asp-92, and Asp-117 each coordinate S-adenosyl-L-methionine. Lys-157 acts as the Proton acceptor in catalysis. Coiled-coil stretches lie at residues 358–400 (ESMD…VRMQ) and 462–492 (GETD…RKAA). 2 disordered regions span residues 370-396 (LEKL…QKDI) and 443-676 (VVAS…TKDG). Residues 386-396 (RKENERKQKDI) show a composition bias toward basic and acidic residues. Over residues 463–483 (ETDDESDEELDRLETELDDMY) the composition is skewed to acidic residues. Residues 484-497 (DQFRERKAASDAKY) are compositionally biased toward basic and acidic residues. Residues 526–545 (ISDDSELEEESSGDSDDEDD) show a composition bias toward acidic residues. The segment covering 556–566 (LDTTPSDNSGL) has biased composition (polar residues). Acidic residues predominate over residues 600 to 609 (GEDEDADMED). Composition is skewed to basic and acidic residues over residues 610–627 (TVSK…ADKK) and 659–676 (KSGK…TKDG). Residues 762-789 (REAKGRKKMKAAQRLEKLKKKSDLLVNE) are a coiled coil.

It belongs to the class I-like SAM-binding methyltransferase superfamily. RNA methyltransferase RlmE family. SPB1 subfamily. In terms of assembly, component of the nucleolar and nucleoplasmic pre-60S ribosomal particle.

Its subcellular location is the nucleus. It localises to the nucleolus. The enzyme catalyses a ribonucleotide in rRNA + S-adenosyl-L-methionine = a 2'-O-methylribonucleotide in rRNA + S-adenosyl-L-homocysteine + H(+). In terms of biological role, required for proper assembly of pre-ribosomal particles during the biogenesis of the 60S ribosomal subunit. The protein is AdoMet-dependent rRNA methyltransferase SPB1 of Pyricularia oryzae (strain 70-15 / ATCC MYA-4617 / FGSC 8958) (Rice blast fungus).